A 1045-amino-acid chain; its full sequence is Mitotic deacetylase-associated SANT domain protein (1045 aa).

Methionine 1 carries the N-acetylmethionine modification. Disordered regions lie at residues 1-68 (MNLQ…PPPS) and 99-159 (NSVM…PTYY). A compositionally biased stretch (polar residues) spans 132–146 (STWNCHSLSLYSATK). A Glycyl lysine isopeptide (Lys-Gly) (interchain with G-Cter in SUMO2) cross-link involves residue lysine 166. Residue arginine 193 is modified to Asymmetric dimethylarginine. Disordered stretches follow at residues 228 to 264 (QVFR…QQAA), 276 to 305 (SMPQ…AHHS), 330 to 349 (APQP…SRRL), 378 to 397 (HHWP…HPEA), and 410 to 441 (LPDG…STGD). A compositionally biased stretch (low complexity) spans 240–264 (VAAFPPQKQQQQQQPQQQQQQQQAA). A compositionally biased stretch (basic and acidic residues) spans 412–425 (DGERLAPNGREREA). An Omega-N-methylarginine modification is found at arginine 447. At serine 461 the chain carries Phosphoserine. The segment at 543–563 (QAGGLDEDGKGPEQNPAEHKP) is disordered. A compositionally biased stretch (basic and acidic residues) spans 549–563 (EDGKGPEQNPAEHKP). Lysine 590 participates in a covalent cross-link: Glycyl lysine isopeptide (Lys-Gly) (interchain with G-Cter in SUMO1); alternate. A Glycyl lysine isopeptide (Lys-Gly) (interchain with G-Cter in SUMO2); alternate cross-link involves residue lysine 590. Threonine 655 is modified (phosphothreonine). Residue serine 661 is modified to Phosphoserine. Threonine 704 carries the phosphothreonine modification. Residue serine 709 is modified to Phosphoserine. Threonine 715 carries the post-translational modification Phosphothreonine. One can recognise an ELM2 domain in the interval 721–813 (PRINVGSRFQ…ETLNKLLLKK (93 aa)). Residues 828–879 (TGSDQWKMAERKLFNKGIAIYKKDFFLVQKLIQTKTVAQCVEFYYTYKKQVK) enclose the SANT domain. The tract at residues 887–1045 (TFGDVDTSDE…NTFPCKKCGR (159 aa)) is disordered. 2 stretches are compositionally biased toward basic and acidic residues: residues 894-909 (SDEK…DIKT) and 919-942 (PRRE…RKEG). Serine 923 is subject to Phosphoserine. Acidic residues predominate over residues 943–957 (EEEVPEIQEKEEQEE). A compositionally biased stretch (polar residues) spans 970–980 (ATQTLQANESA).

Interacts with DNTTIP1. Identified in a histone deacetylase complex that contains DNTTIP1, HDAC1 and MIDEAS; this complex assembles into a tetramer that contains four copies of each protein chain.

Its subcellular location is the nucleus. The chain is Mitotic deacetylase-associated SANT domain protein from Homo sapiens (Human).